The following is a 121-amino-acid chain: Basic phospholipase A2 daboxin P (121 aa).

Intrachain disulfides connect Cys-26-Cys-115, Cys-28-Cys-44, Cys-43-Cys-95, Cys-49-Cys-121, Cys-50-Cys-88, Cys-57-Cys-81, and Cys-75-Cys-86. 3 residues coordinate Ca(2+): Tyr-27, Gly-29, and Gly-31. The active site involves His-47. Asp-48 contributes to the Ca(2+) binding site. The active site involves Asp-89.

Requires Ca(2+) as cofactor. In terms of tissue distribution, expressed by the venom gland.

The protein resides in the secreted. The enzyme catalyses a 1,2-diacyl-sn-glycero-3-phosphocholine + H2O = a 1-acyl-sn-glycero-3-phosphocholine + a fatty acid + H(+). Snake venom phospholipase A2 (PLA2) that exhibits anticoagulant activity, probably by binding to factor X and its activated form factor Xa (F10). Shows no cytotoxicity. PLA2 catalyzes the calcium-dependent hydrolysis of the 2-acyl groups in 3-sn-phosphoglycerides. The sequence is that of Basic phospholipase A2 daboxin P from Daboia russelii (Russel's viper).